Here is a 414-residue protein sequence, read N- to C-terminus: tRNA dimethylallyltransferase (414 aa).

33-40 is a binding site for ATP; it reads APTASGKT. Residue 35–40 coordinates substrate; the sequence is TASGKT. 3 interaction with substrate tRNA regions span residues 58-61, 182-186, and 266-271; these read DSAL, QRITR, and RCVGYR.

This sequence belongs to the IPP transferase family. Monomer. Requires Mg(2+) as cofactor.

It catalyses the reaction adenosine(37) in tRNA + dimethylallyl diphosphate = N(6)-dimethylallyladenosine(37) in tRNA + diphosphate. Its function is as follows. Catalyzes the transfer of a dimethylallyl group onto the adenine at position 37 in tRNAs that read codons beginning with uridine, leading to the formation of N6-(dimethylallyl)adenosine (i(6)A). In Psychrobacter arcticus (strain DSM 17307 / VKM B-2377 / 273-4), this protein is tRNA dimethylallyltransferase.